The chain runs to 91 residues: Sec-independent protein translocase protein TatA (91 aa).

A helical membrane pass occupies residues 1–21 (MGIFDWKHWIVILIVVVLVFG). Positions 42-91 (AMHDDDKPAEQPAPQPQQAQPAPQGSPLNQPHTIDAQAHKVDEPIRKDQV) are disordered. Residues 51–64 (EQPAPQPQQAQPAP) show a composition bias toward low complexity. The span at 78–91 (QAHKVDEPIRKDQV) shows a compositional bias: basic and acidic residues.

It belongs to the TatA/E family. As to quaternary structure, the Tat system comprises two distinct complexes: a TatABC complex, containing multiple copies of TatA, TatB and TatC subunits, and a separate TatA complex, containing only TatA subunits. Substrates initially bind to the TatABC complex, which probably triggers association of the separate TatA complex to form the active translocon.

The protein localises to the cell inner membrane. Part of the twin-arginine translocation (Tat) system that transports large folded proteins containing a characteristic twin-arginine motif in their signal peptide across membranes. TatA could form the protein-conducting channel of the Tat system. The polypeptide is Sec-independent protein translocase protein TatA (Pseudomonas syringae pv. tomato (strain ATCC BAA-871 / DC3000)).